The sequence spans 314 residues: Aspartate carbamoyltransferase catalytic subunit (314 aa).

2 residues coordinate carbamoyl phosphate: R55 and T56. K83 provides a ligand contact to L-aspartate. Carbamoyl phosphate is bound by residues R105, H139, and Q142. 2 residues coordinate L-aspartate: R172 and R226. Carbamoyl phosphate contacts are provided by G267 and P268.

Belongs to the aspartate/ornithine carbamoyltransferase superfamily. ATCase family. As to quaternary structure, heterododecamer (2C3:3R2) of six catalytic PyrB chains organized as two trimers (C3), and six regulatory PyrI chains organized as three dimers (R2).

It catalyses the reaction carbamoyl phosphate + L-aspartate = N-carbamoyl-L-aspartate + phosphate + H(+). The protein operates within pyrimidine metabolism; UMP biosynthesis via de novo pathway; (S)-dihydroorotate from bicarbonate: step 2/3. Functionally, catalyzes the condensation of carbamoyl phosphate and aspartate to form carbamoyl aspartate and inorganic phosphate, the committed step in the de novo pyrimidine nucleotide biosynthesis pathway. The chain is Aspartate carbamoyltransferase catalytic subunit from Rhodococcus jostii (strain RHA1).